Reading from the N-terminus, the 674-residue chain is Metal-nicotianamine transporter YSL2 (674 aa).

The interval M1 to R29 is disordered. Basic and acidic residues predominate over residues E7–G22. 14 consecutive transmembrane segments (helical) span residues G41–L61, G64–W84, C118–L138, G162–L182, G224–G244, L283–I303, F329–I349, L392–F412, V420–L440, I452–V472, V506–F526, S559–I579, F604–W624, and A633–P653.

This sequence belongs to the YSL (TC 2.A.67.2) family. In terms of tissue distribution, expressed in phloem cells of vascular bundles in leaves and leaf sheaths. Expressed at low levels in phloem companion cells in the central cylinder of roots, but not in the epidermal or cortical cells.

The protein resides in the cell membrane. Functionally, involved in the phloem transport of iron and manganese and their translocation into the grain. Transports iron- and manganese-nicotianamine chelates, but not iron-phytosiderophore. In Oryza sativa subsp. japonica (Rice), this protein is Metal-nicotianamine transporter YSL2 (YSL2).